The chain runs to 403 residues: Tripartite motif-containing protein 59 (403 aa).

The segment at 10–60 (CPICYSIFEDPRVLPCSHTFCRNCLENVLQASGNFYIWRPLRIPLKCPNCR) adopts an RING-type zinc-finger fold. Residues 92-134 (PDVVTCPEHYRQPLNVYCLLDKKLVCGHCLTIGQHHGHPIDDL) form a B box-type zinc finger. Zn(2+) contacts are provided by Cys97, His100, Cys120, and His126. Positions 163-246 (LIEKLEEQKC…TITTSLQDES (84 aa)) form a coiled coil. The helical transmembrane segment at 329–349 (ILNIAIVSLISVILMLILLFN) threads the bilayer.

Belongs to the TRIM/RBCC family. In terms of assembly, interacts with ECSIT. In terms of tissue distribution, moderately expressed in the spleen, brain and heart and very highly expressed in the testis.

The protein localises to the endoplasmic reticulum membrane. It catalyses the reaction S-ubiquitinyl-[E2 ubiquitin-conjugating enzyme]-L-cysteine + [acceptor protein]-L-lysine = [E2 ubiquitin-conjugating enzyme]-L-cysteine + N(6)-ubiquitinyl-[acceptor protein]-L-lysine.. It functions in the pathway protein modification; protein ubiquitination. Functionally, E3 ubiquitin ligase involved in different processes such as development and immune response. Serves as a negative regulator for innate immune signaling pathways by suppressing RLR-induced activation of IRF3/7 and NF-kappa-B via interaction with adapter ECSIT. Regulates autophagy through modulating both the transcription and the ubiquitination of BECN1. On the one hand, regulates the transcription of BECN1 through negatively modulating the NF-kappa-B pathway. On the other hand, regulates TRAF6-mediated 'Lys-63'-linked ubiquitination of BECN1, thus affecting the formation of the BECN1-PIK3C3 complex. In addition, mediates 'Lys-48'-linked ubiquitination of TRAF6 and thereby promotes TRAF6 proteasomal degradation. Also acts as a critical regulator for early embryo development from blastocyst stage to gastrula through modulating F-actin assembly and WASH1 'Lys-63'-linked ubiquitination. The sequence is that of Tripartite motif-containing protein 59 (Trim59) from Mus musculus (Mouse).